A 215-amino-acid polypeptide reads, in one-letter code: Penicillin-binding protein activator LpoB (215 aa).

The first 19 residues, 1-19, serve as a signal peptide directing secretion; it reads MMKMCRYALITALAIFLAG. Cys20 is lipidated: N-palmitoyl cysteine. The S-diacylglycerol cysteine moiety is linked to residue Cys20. Residues 28 to 78 form a disordered region; it reads APVEEAKPQPQQPAQPQPTVPTVPAVPSVPAQPGPIEHQDQQSGQPAPRVR. The segment covering 37–48 has biased composition (pro residues); it reads PQQPAQPQPTVP. A compositionally biased stretch (low complexity) spans 49–58; it reads TVPAVPSVPA.

This sequence belongs to the LpoB family. Interacts with PBP1b.

The protein localises to the cell outer membrane. In terms of biological role, regulator of peptidoglycan synthesis that is essential for the function of penicillin-binding protein 1B (PBP1b). The sequence is that of Penicillin-binding protein activator LpoB from Klebsiella pneumoniae subsp. pneumoniae (strain ATCC 700721 / MGH 78578).